The following is a 346-amino-acid chain: MELAPVNLSEGNGSDPEPPAEPRPLFGIGVENFITLVVFGLIFAMGVLGNSLVITVLARSKPGKPRSTTNLFILNLSIADLAYLLFCIPFQATVYALPTWVLGAFICKFIHYFFTVSMLVSIFTLAAMSVDRYVAIVHSRRSSSLRVSRNALLGVGFIWALSIAMASPVAYYQRLFHRDSNQTFCWEHWPNQLHKKAYVVCTFVFGYLLPLLLICFCYAKVLNHLHKKLKNMSKKSEASKKKTAQTVLVVVVVFGISWLPHHVIHLWAEFGAFPLTPASFFFRITAHCLAYSNSSVNPIIYAFLSENFRKAYKQVFKCRVCNESPHGDAKEKNRIDTPPSTNCTHV.

Residues methionine 1–phenylalanine 33 lie on the Extracellular side of the membrane. N-linked (GlcNAc...) asparagine glycans are attached at residues asparagine 7 and asparagine 12. Residues isoleucine 34 to isoleucine 54 form a helical membrane-spanning segment. The Cytoplasmic segment spans residues threonine 55–threonine 69. Residues asparagine 70 to phenylalanine 90 form a helical membrane-spanning segment. The Extracellular segment spans residues glutamine 91 to lysine 108. The cysteines at positions 107 and 185 are disulfide-linked. Residues phenylalanine 109–valine 130 traverse the membrane as a helical segment. Residues aspartate 131–asparagine 150 lie on the Cytoplasmic side of the membrane. The chain crosses the membrane as a helical span at residues alanine 151 to tyrosine 171. Topologically, residues tyrosine 172–lysine 196 are extracellular. Asparagine 181 is a glycosylation site (N-linked (GlcNAc...) asparagine). Residues alanine 197 to cysteine 217 traverse the membrane as a helical segment. Over tyrosine 218 to threonine 246 the chain is Cytoplasmic. The helical transmembrane segment at valine 247–tryptophan 267 threads the bilayer. At alanine 268 to glutamate 269 the chain is on the extracellular side. The chain crosses the membrane as a helical span at residues phenylalanine 270–alanine 290. The Cytoplasmic segment spans residues tyrosine 291–valine 346. Cysteine 318 is lipidated: S-palmitoyl cysteine. Basic and acidic residues predominate over residues histidine 326–isoleucine 335. The tract at residues histidine 326–valine 346 is disordered.

Belongs to the G-protein coupled receptor 1 family. As to quaternary structure, interacts with GRP39 AND HTR1A. Post-translationally, three cysteine residues are found in the C-terminus, at least one of which may be palmitoylated. Spinal cord, small intestine, Rin14B insulinoma cells and several brain regions, particularly ventral hippocampus, amygdala, supraoptic nucleus, hypothalamus, thalamus, lateral parabrachial nucleus and locus coeruleus.

The protein resides in the cell membrane. Receptor for the hormone galanin. The activity of this receptor is mediated by G proteins that inhibit adenylate cyclase activity. This Rattus norvegicus (Rat) protein is Galanin receptor type 1 (Galr1).